The sequence spans 490 residues: Betaine aldehyde dehydrogenase (490 aa).

K(+) contacts are provided by T26, I27, and D93. Residue 150–152 (GAW) participates in NAD(+) binding. The Charge relay system role is filled by K162. Residue 176–179 (KPSE) coordinates NAD(+). V180 serves as a coordination point for K(+). Residue 230–233 (GTST) coordinates NAD(+). K(+) is bound at residue L246. E252 (proton acceptor) is an active-site residue. Residues G254, C286, and E387 each coordinate NAD(+). C286 serves as the catalytic Nucleophile. At C286 the chain carries Cysteine sulfenic acid (-SOH). Residues K457 and G460 each coordinate K(+). E464 (charge relay system) is an active-site residue.

The protein belongs to the aldehyde dehydrogenase family. As to quaternary structure, dimer of dimers. Requires K(+) as cofactor.

The enzyme catalyses betaine aldehyde + NAD(+) + H2O = glycine betaine + NADH + 2 H(+). Its pathway is amine and polyamine biosynthesis; betaine biosynthesis via choline pathway; betaine from betaine aldehyde: step 1/1. Functionally, involved in the biosynthesis of the osmoprotectant glycine betaine. Catalyzes the irreversible oxidation of betaine aldehyde to the corresponding acid. The protein is Betaine aldehyde dehydrogenase of Pseudomonas aeruginosa (strain UCBPP-PA14).